The sequence spans 137 residues: uncharacterized protein (137 aa).

The region spanning 4 to 118 is the CENP-V/GFA domain; it reads YEGNCLCKAI…CIDDKPDCYD (115 aa). Zn(2+) is bound by residues cysteine 8, cysteine 10, cysteine 27, cysteine 29, cysteine 32, cysteine 71, and cysteine 74.

The protein belongs to the Gfa family. The cofactor is Zn(2+).

It localises to the cytoplasm. The protein localises to the nucleus. This is an uncharacterized protein from Schizosaccharomyces pombe (strain 972 / ATCC 24843) (Fission yeast).